The following is a 146-amino-acid chain: Large ribosomal subunit protein uL15 (146 aa).

Positions 1–46 (MAIELHDLKPAPGAHKAKTRVGRGEGSKGKTAGRGTKGTGARKNVP) are disordered. Positions 29 to 43 (GKTAGRGTKGTGARK) are enriched in low complexity.

The protein belongs to the universal ribosomal protein uL15 family. Part of the 50S ribosomal subunit.

Binds to the 23S rRNA. The sequence is that of Large ribosomal subunit protein uL15 from Cutibacterium acnes (strain DSM 16379 / KPA171202) (Propionibacterium acnes).